Reading from the N-terminus, the 63-residue chain is Large ribosomal subunit protein uL29 (63 aa).

It belongs to the universal ribosomal protein uL29 family.

The polypeptide is Large ribosomal subunit protein uL29 (Pseudomonas aeruginosa (strain UCBPP-PA14)).